The following is a 276-amino-acid chain: Elongation factor Ts (276 aa).

The involved in Mg(2+) ion dislocation from EF-Tu stretch occupies residues 80 to 83; that stretch reads TDFV.

The protein belongs to the EF-Ts family.

It is found in the cytoplasm. Functionally, associates with the EF-Tu.GDP complex and induces the exchange of GDP to GTP. It remains bound to the aminoacyl-tRNA.EF-Tu.GTP complex up to the GTP hydrolysis stage on the ribosome. In Acidothermus cellulolyticus (strain ATCC 43068 / DSM 8971 / 11B), this protein is Elongation factor Ts.